The primary structure comprises 179 residues: Large ribosomal subunit protein uL5 (179 aa).

Belongs to the universal ribosomal protein uL5 family. As to quaternary structure, part of the 50S ribosomal subunit; part of the 5S rRNA/L5/L18/L25 subcomplex. Contacts the 5S rRNA and the P site tRNA. Forms a bridge to the 30S subunit in the 70S ribosome.

This is one of the proteins that bind and probably mediate the attachment of the 5S RNA into the large ribosomal subunit, where it forms part of the central protuberance. In the 70S ribosome it contacts protein S13 of the 30S subunit (bridge B1b), connecting the 2 subunits; this bridge is implicated in subunit movement. Contacts the P site tRNA; the 5S rRNA and some of its associated proteins might help stabilize positioning of ribosome-bound tRNAs. This Prochlorococcus marinus (strain MIT 9215) protein is Large ribosomal subunit protein uL5.